A 240-amino-acid polypeptide reads, in one-letter code: MKKTKRIFTALSHLFSPKWWKKNWQRVVLLFFFAVFALLLIFRFVPIPFSAYMVQQKIANLLQGDFRYQIQYDWVSLENISPNIQLAVISSEDQRFPEHLGFDFEAIQRAIRYNEKSNKGIRGASTISQQTAKNLMLWHGQNWLRKGLEVPATMLLELTWSKKRILEVYLNIAEFGNGIFGVEAASRYYFKKSAKNLSQNEAALLVAVLPNPIIYKVNKPSLLVRKKTSLDFETNGKFRY.

The chain crosses the membrane as a helical span at residues 27 to 47 (VVLLFFFAVFALLLIFRFVPI).

Belongs to the glycosyltransferase 51 family.

It is found in the cell inner membrane. It carries out the reaction [GlcNAc-(1-&gt;4)-Mur2Ac(oyl-L-Ala-gamma-D-Glu-L-Lys-D-Ala-D-Ala)](n)-di-trans,octa-cis-undecaprenyl diphosphate + beta-D-GlcNAc-(1-&gt;4)-Mur2Ac(oyl-L-Ala-gamma-D-Glu-L-Lys-D-Ala-D-Ala)-di-trans,octa-cis-undecaprenyl diphosphate = [GlcNAc-(1-&gt;4)-Mur2Ac(oyl-L-Ala-gamma-D-Glu-L-Lys-D-Ala-D-Ala)](n+1)-di-trans,octa-cis-undecaprenyl diphosphate + di-trans,octa-cis-undecaprenyl diphosphate + H(+). The protein operates within cell wall biogenesis; peptidoglycan biosynthesis. Peptidoglycan polymerase that catalyzes glycan chain elongation from lipid-linked precursors. The protein is Biosynthetic peptidoglycan transglycosylase of Haemophilus influenzae (strain PittEE).